We begin with the raw amino-acid sequence, 68 residues long: Alpha-conotoxin Lp1.4 (68 aa).

An N-terminal signal peptide occupies residues 1–21; the sequence is MGMRMMSIMFMLVVLATTVVS. A propeptide spanning residues 22–48 is cleaved from the precursor; that stretch reads FTSDRALDAMNAAASKKASRLIALAVR. Intrachain disulfides connect cysteine 50/cysteine 56 and cysteine 51/cysteine 64. A ser-Xaa-Pro motif, crucial for potent interaction with nAChR region spans residues 52–54; that stretch reads SHP. Aspartate 65 carries the aspartic acid 1-amide modification.

It belongs to the conotoxin A superfamily. Expressed by the venom duct.

The protein resides in the secreted. Functionally, alpha-conotoxins act on postsynaptic membranes, they bind to the nicotinic acetylcholine receptors (nAChR) and thus inhibit them. This toxin inhibits mouse muscle alpha-1-beta-1-gamma-delta (CHRNA1-CHRNB1-CHRNG-CHRND), and weakly rat neuronal alpha-6/alpha-3-beta-2 (CHRNA6/CHRNA3-CHRNB2). The polypeptide is Alpha-conotoxin Lp1.4 (Conus leopardus (Leopard cone)).